A 479-amino-acid polypeptide reads, in one-letter code: Ribulose bisphosphate carboxylase large chain (479 aa).

Positions 1-2 (MS) are excised as a propeptide. Residues Asn123 and Thr173 each coordinate substrate. Catalysis depends on Lys175, which acts as the Proton acceptor. Lys177 is a binding site for substrate. Residues Lys201, Asp203, and Glu204 each coordinate Mg(2+). An N6-carboxylysine modification is found at Lys201. Ser208 carries the phosphoserine modification. His294 (proton acceptor) is an active-site residue. 2 residues coordinate substrate: Arg295 and His327. The residue at position 330 (Thr330) is a Phosphothreonine. Ser379 contacts substrate.

It belongs to the RuBisCO large chain family. Type I subfamily. As to quaternary structure, heterohexadecamer of 8 large chains and 8 small chains; disulfide-linked. The disulfide link is formed within the large subunit homodimers. Requires Mg(2+) as cofactor. In terms of processing, the disulfide bond which can form in the large chain dimeric partners within the hexadecamer appears to be associated with oxidative stress and protein turnover.

The protein localises to the plastid. Its subcellular location is the chloroplast. It carries out the reaction 2 (2R)-3-phosphoglycerate + 2 H(+) = D-ribulose 1,5-bisphosphate + CO2 + H2O. The enzyme catalyses D-ribulose 1,5-bisphosphate + O2 = 2-phosphoglycolate + (2R)-3-phosphoglycerate + 2 H(+). In terms of biological role, ruBisCO catalyzes two reactions: the carboxylation of D-ribulose 1,5-bisphosphate, the primary event in carbon dioxide fixation, as well as the oxidative fragmentation of the pentose substrate in the photorespiration process. Both reactions occur simultaneously and in competition at the same active site. This chain is Ribulose bisphosphate carboxylase large chain, found in Barbarea verna (Land cress).